A 294-amino-acid chain; its full sequence is N-acetylmuramic acid 6-phosphate etherase (294 aa).

Residues 54 to 217 enclose the SIS domain; the sequence is VIASFRKGGR…STTSMIGVGK (164 aa). Catalysis depends on Glu-82, which acts as the Proton donor. The active site involves Glu-113.

This sequence belongs to the GCKR-like family. MurNAc-6-P etherase subfamily. Homodimer.

The enzyme catalyses N-acetyl-D-muramate 6-phosphate + H2O = N-acetyl-D-glucosamine 6-phosphate + (R)-lactate. Its pathway is amino-sugar metabolism; N-acetylmuramate degradation. Its function is as follows. Specifically catalyzes the cleavage of the D-lactyl ether substituent of MurNAc 6-phosphate, producing GlcNAc 6-phosphate and D-lactate. The protein is N-acetylmuramic acid 6-phosphate etherase of Exiguobacterium sp. (strain ATCC BAA-1283 / AT1b).